The primary structure comprises 125 residues: Small ribosomal subunit protein uS12 (125 aa).

Asp-89 carries the post-translational modification 3-methylthioaspartic acid. Positions 106–125 (GVKDRKQSRSKYGAKRPKKA) are disordered. Residues 113–125 (SRSKYGAKRPKKA) show a composition bias toward basic residues.

It belongs to the universal ribosomal protein uS12 family. Part of the 30S ribosomal subunit. Contacts proteins S8 and S17. May interact with IF1 in the 30S initiation complex.

Its function is as follows. With S4 and S5 plays an important role in translational accuracy. Functionally, interacts with and stabilizes bases of the 16S rRNA that are involved in tRNA selection in the A site and with the mRNA backbone. Located at the interface of the 30S and 50S subunits, it traverses the body of the 30S subunit contacting proteins on the other side and probably holding the rRNA structure together. The combined cluster of proteins S8, S12 and S17 appears to hold together the shoulder and platform of the 30S subunit. The polypeptide is Small ribosomal subunit protein uS12 (Azoarcus sp. (strain BH72)).